The sequence spans 195 residues: Shikimate kinase (195 aa).

31–36 (GAGKSC) serves as a coordination point for ATP. S35 is a Mg(2+) binding site. Substrate contacts are provided by D53, R77, and G99. R137 provides a ligand contact to ATP. R156 serves as a coordination point for substrate.

Belongs to the shikimate kinase family. Monomer. The cofactor is Mg(2+).

The protein resides in the cytoplasm. The catalysed reaction is shikimate + ATP = 3-phosphoshikimate + ADP + H(+). It functions in the pathway metabolic intermediate biosynthesis; chorismate biosynthesis; chorismate from D-erythrose 4-phosphate and phosphoenolpyruvate: step 5/7. Its function is as follows. Catalyzes the specific phosphorylation of the 3-hydroxyl group of shikimic acid using ATP as a cosubstrate. In Paramagnetospirillum magneticum (strain ATCC 700264 / AMB-1) (Magnetospirillum magneticum), this protein is Shikimate kinase.